We begin with the raw amino-acid sequence, 378 residues long: Glutamate 5-kinase (378 aa).

Lys20 is a binding site for ATP. Ser60, Asp147, and Asn159 together coordinate substrate. Residues 179-180 and 221-227 contribute to the ATP site; these read TD and TGGMLTK. Positions 286–364 constitute a PUA domain; sequence RGRVVLDAGA…SQIARILGSM (79 aa).

It belongs to the glutamate 5-kinase family.

The protein resides in the cytoplasm. It carries out the reaction L-glutamate + ATP = L-glutamyl 5-phosphate + ADP. It functions in the pathway amino-acid biosynthesis; L-proline biosynthesis; L-glutamate 5-semialdehyde from L-glutamate: step 1/2. Functionally, catalyzes the transfer of a phosphate group to glutamate to form L-glutamate 5-phosphate. The protein is Glutamate 5-kinase of Bordetella petrii (strain ATCC BAA-461 / DSM 12804 / CCUG 43448).